A 1078-amino-acid chain; its full sequence is Disheveled-associated activator of morphogenesis 1 (1078 aa).

Residue serine 34 is modified to Phosphoserine. Residues 45–420 (LPMPPVEELD…QIVIQNDKGQ (376 aa)) form the GBD/FH3 domain. A coiled-coil region spans residues 437–526 (RMLVNENEVK…ELSRRAVCAS (90 aa)). 2 disordered regions span residues 456–480 (RKEHNELQQKLEKKERECDAKTQEK) and 524–585 (CASI…PLGA). Residues 528–599 (PGGPSPGAPG…PGAPMGLALK (72 aa)) enclose the FH1 domain. Composition is skewed to pro residues over residues 530-539 (GPSPGAPGGP) and 548-585 (LLPPPPPPPLPGGMLPPPPPPLPPGGPPPPPGPPPLGA). The FH2 domain occupies 600-1009 (KKSIPQPTNA…EERRARMEAQ (410 aa)). An actin-binding region spans residues 693-702 (AQNCNILLSR). A compositionally biased stretch (basic and acidic residues) spans 987 to 1027 (KQENENMRKKKEEEERRARMEAQLKEQRERERKMRKAKENS). Disordered regions lie at residues 987–1034 (KQEN…GEFD) and 1055–1078 (RNRKRITNQMTDSSRERPITKLNF). A phosphoserine mark is found at serine 1027 and serine 1030. Positions 1027 to 1058 (SEESGEFDDLVSALRSGEVFDKDLSKLKRNRK) constitute a DAD domain. Basic and acidic residues predominate over residues 1067–1078 (SSRERPITKLNF).

Belongs to the formin homology family. Homodimer. Interacts with CIP4, FNBP1 and FNBP1L. Interacts with the SH3 domains of Abl, BTK, endophilin, spectrin and SRC. Binds specifically to GTP-bound CDC42 and RHOA. Interacts with INTU; INTU mediates the indirect interaction between DAAM1 and NPHP4. Interacts (via coiled coil domain) with KANK1 (via coiled coil domain). Expressed in all tissues examined.

It is found in the cytoplasm. The protein localises to the cytoskeleton. Its subcellular location is the cilium basal body. Functionally, binds to disheveled (Dvl) and Rho, and mediates Wnt-induced Dvl-Rho complex formation. May play a role as a scaffolding protein to recruit Rho-GDP and Rho-GEF, thereby enhancing Rho-GTP formation. Can direct nucleation and elongation of new actin filaments. Involved in building functional cilia. Involved in the organization of the subapical actin network in multiciliated epithelial cells. Together with DAAM2, required for myocardial maturation and sarcomere assembly. During cell division, may regulate RHOA activation that signals spindle orientation and chromosomal segregation. The polypeptide is Disheveled-associated activator of morphogenesis 1 (DAAM1) (Homo sapiens (Human)).